An 874-amino-acid polypeptide reads, in one-letter code: Alanine--tRNA ligase (874 aa).

His-563, His-567, Cys-665, and His-669 together coordinate Zn(2+).

This sequence belongs to the class-II aminoacyl-tRNA synthetase family. The cofactor is Zn(2+).

The protein resides in the cytoplasm. It catalyses the reaction tRNA(Ala) + L-alanine + ATP = L-alanyl-tRNA(Ala) + AMP + diphosphate. Catalyzes the attachment of alanine to tRNA(Ala) in a two-step reaction: alanine is first activated by ATP to form Ala-AMP and then transferred to the acceptor end of tRNA(Ala). Also edits incorrectly charged Ser-tRNA(Ala) and Gly-tRNA(Ala) via its editing domain. The chain is Alanine--tRNA ligase from Haemophilus influenzae (strain 86-028NP).